We begin with the raw amino-acid sequence, 716 residues long: DNA ligase (716 aa).

NAD(+) contacts are provided by residues 49–53 (DAEYD), 98–99 (SL), and Glu131. Residue Lys133 is the N6-AMP-lysine intermediate of the active site. The NAD(+) site is built by Arg154, Glu191, Lys308, and Lys332. Zn(2+) is bound by residues Cys437, Cys439, Cys461, and Cys467. The 79-residue stretch at 638 to 716 (KRHSPIATKT…EDEWLQLIAE (79 aa)) folds into the BRCT domain.

This sequence belongs to the NAD-dependent DNA ligase family. LigA subfamily. The cofactor is Mg(2+). It depends on Mn(2+) as a cofactor.

The catalysed reaction is NAD(+) + (deoxyribonucleotide)n-3'-hydroxyl + 5'-phospho-(deoxyribonucleotide)m = (deoxyribonucleotide)n+m + AMP + beta-nicotinamide D-nucleotide.. In terms of biological role, DNA ligase that catalyzes the formation of phosphodiester linkages between 5'-phosphoryl and 3'-hydroxyl groups in double-stranded DNA using NAD as a coenzyme and as the energy source for the reaction. It is essential for DNA replication and repair of damaged DNA. This is DNA ligase from Bradyrhizobium sp. (strain BTAi1 / ATCC BAA-1182).